The chain runs to 105 residues: Large ribosomal subunit protein uL24 (105 aa).

The protein belongs to the universal ribosomal protein uL24 family. Part of the 50S ribosomal subunit.

Functionally, one of two assembly initiator proteins, it binds directly to the 5'-end of the 23S rRNA, where it nucleates assembly of the 50S subunit. Its function is as follows. One of the proteins that surrounds the polypeptide exit tunnel on the outside of the subunit. In Xanthomonas oryzae pv. oryzae (strain MAFF 311018), this protein is Large ribosomal subunit protein uL24.